Consider the following 259-residue polypeptide: Enolase-phosphatase E1 (259 aa).

Residues Asp-16 and Glu-18 each coordinate Mg(2+). Substrate contacts are provided by residues 151 to 152 (SS) and Lys-185. Asp-210 is a Mg(2+) binding site.

It belongs to the HAD-like hydrolase superfamily. MasA/MtnC family. Monomer. Mg(2+) serves as cofactor.

It is found in the cytoplasm. It localises to the nucleus. The catalysed reaction is 5-methylsulfanyl-2,3-dioxopentyl phosphate + H2O = 1,2-dihydroxy-5-(methylsulfanyl)pent-1-en-3-one + phosphate. It functions in the pathway amino-acid biosynthesis; L-methionine biosynthesis via salvage pathway; L-methionine from S-methyl-5-thio-alpha-D-ribose 1-phosphate: step 3/6. Its pathway is amino-acid biosynthesis; L-methionine biosynthesis via salvage pathway; L-methionine from S-methyl-5-thio-alpha-D-ribose 1-phosphate: step 4/6. Bifunctional enzyme that catalyzes the enolization of 2,3-diketo-5-methylthiopentyl-1-phosphate (DK-MTP-1-P) into the intermediate 2-hydroxy-3-keto-5-methylthiopentenyl-1-phosphate (HK-MTPenyl-1-P), which is then dephosphorylated to form the acireductone 1,2-dihydroxy-3-keto-5-methylthiopentene (DHK-MTPene). This chain is Enolase-phosphatase E1 (enoph1), found in Xenopus tropicalis (Western clawed frog).